A 589-amino-acid chain; its full sequence is Probable translation initiation factor IF-2 (589 aa).

The tr-type G domain occupies 14–231 (LRQPIVCVLG…GLAQRFLESE (218 aa)). The G1 stretch occupies residues 23 to 30 (GHVDHGKT). Residue 23 to 30 (GHVDHGKT) coordinates GTP. The G2 stretch occupies residues 48 to 52 (GITQR). A G3 region spans residues 84-87 (DTPG). Residues 84–88 (DTPGH) and 138–141 (NKID) each bind GTP. Residues 138–141 (NKID) form a G4 region. The segment at 206–208 (SAK) is G5.

It belongs to the TRAFAC class translation factor GTPase superfamily. Classic translation factor GTPase family. IF-2 subfamily.

Functionally, function in general translation initiation by promoting the binding of the formylmethionine-tRNA to ribosomes. Seems to function along with eIF-2. This is Probable translation initiation factor IF-2 from Thermoplasma volcanium (strain ATCC 51530 / DSM 4299 / JCM 9571 / NBRC 15438 / GSS1).